A 211-amino-acid polypeptide reads, in one-letter code: Large ribosomal subunit protein uL4 (211 aa).

The interval 44-94 is disordered; sequence RSGNHATKTRSEVRGGGKKPWSQKGTGHARQGSTRAPHWVGGGTVHGPQKR.

This sequence belongs to the universal ribosomal protein uL4 family. Part of the 50S ribosomal subunit.

Functionally, one of the primary rRNA binding proteins, this protein initially binds near the 5'-end of the 23S rRNA. It is important during the early stages of 50S assembly. It makes multiple contacts with different domains of the 23S rRNA in the assembled 50S subunit and ribosome. In terms of biological role, forms part of the polypeptide exit tunnel. The polypeptide is Large ribosomal subunit protein uL4 (Leptospira borgpetersenii serovar Hardjo-bovis (strain JB197)).